Reading from the N-terminus, the 184-residue chain is MLDAFSRSVVSADAKTAAVGAGDIAALRQYVAEGNKRLDAVNAITSNASCIVSDAVTGMICENTGLIQAGGNCYPNRRMAACLRDGEIILRYISYALLAGDASVLDDRCLNGLKETYIALGVPAQSAARAVAIMKASATAHIGETNTQANGGAKFRKMETTQGDCSALVAEAASYFDRVISAIA.

Positions 50 and 61 each coordinate (2R,3E)-phycoerythrobilin. Asparagine 72 carries the post-translational modification N4-methylasparagine. Residues cysteine 82 and cysteine 165 each contribute to the (2R,3E)-phycoerythrobilin site.

It belongs to the phycobiliprotein family. As to quaternary structure, heterodimer of an alpha and a beta chain. Contains three covalently linked bilin chromophores.

It is found in the cellular thylakoid membrane. Light-harvesting photosynthetic bile pigment-protein from the phycobiliprotein complex. This is C-phycoerythrin class 1 subunit beta (cpeB) from Synechococcus sp. (strain WH7803).